Here is a 154-residue protein sequence, read N- to C-terminus: Catabolic 3-dehydroquinase (154 aa).

Tyr25 acts as the Proton acceptor in catalysis. Positions 79, 85, and 92 each coordinate substrate. His105 functions as the Proton donor in the catalytic mechanism. Residues 106 to 107 and Arg116 contribute to the substrate site; that span reads IS.

The protein belongs to the type-II 3-dehydroquinase family. Homododecamer. Adopts a ring-like structure, composed of an arrangement of two hexameric rings stacked on top of one another.

The catalysed reaction is 3-dehydroquinate = 3-dehydroshikimate + H2O. It participates in aromatic compound metabolism; 3,4-dihydroxybenzoate biosynthesis; 3,4-dihydroxybenzoate from 3-dehydroquinate: step 1/2. In terms of biological role, is involved in the catabolism of quinate. Allows the utilization of quinate as carbon source via the beta-ketoadipate pathway. The protein is Catabolic 3-dehydroquinase of Botryotinia fuckeliana (strain B05.10) (Noble rot fungus).